A 963-amino-acid chain; its full sequence is Respiratory burst oxidase homolog protein A (963 aa).

The span at 1 to 12 shows a compositional bias: basic and acidic residues; sequence MRGLPGHERRWT. Positions 1–36 are disordered; the sequence is MRGLPGHERRWTSDTVSSGKDLSGESSPGTDSGNIS. Residues 1-399 lie on the Cytoplasmic side of the membrane; sequence MRGLPGHERR…VYSLQENWKR (399 aa). A compositionally biased stretch (polar residues) spans 13 to 36; sequence SDTVSSGKDLSGESSPGTDSGNIS. EF-hand-like regions lie at residues 219–227 and 253–264; these read AKDGYLYRS and RRLKVDKISKEE. The 36-residue stretch at 276–311 folds into the EF-hand domain; it reads SFDSRLQIFFDMVDKNEDGRIGEEEVKEIIMLSASA. Ca(2+) contacts are provided by Asp-289, Asn-291, Asp-293, Arg-295, and Glu-300. A helical transmembrane segment spans residues 400-420; that stretch reads IWVLVLWILIMIGLFLWKFYL. At 421–435 the chain is on the extracellular side; sequence YKQKSAFQVMGYCLL. The chain crosses the membrane as a helical span at residues 436-456; that stretch reads TAKGAAETLKFNMALILLPVC. The Ferric oxidoreductase domain occupies 438 to 595; sequence KGAAETLKFN…LLIIVYIVLI (158 aa). The Cytoplasmic segment spans residues 457 to 482; sequence RNTITFLRSTKLSCFVPFDDNINFHK. Residues 483–503 traverse the membrane as a helical segment; sequence TVAAAIVTGIILHAGNHLVCD. At 504–535 the chain is on the extracellular side; it reads FPKLIHANNTNYQKYLVNDFGPSQPQYIDLVK. Residues 536–556 form a helical membrane-spanning segment; sequence GVEGVTGIIMVILMAIAFTLA. Topologically, residues 557 to 583 are cytoplasmic; it reads TRWFRRSLIKFPKPFDRLTGFNAFWYS. A helical membrane pass occupies residues 584-604; it reads HHLLIIVYIVLIIHGTFLYLV. At 605–759 the chain is on the extracellular side; sequence HNWYSKTTWM…APAQDYRKYD (155 aa). Residues 634-754 enclose the FAD-binding FR-type domain; sequence SGLYTVRLLK…DGPYGAPAQD (121 aa). The helical transmembrane segment at 760–780 threads the bilayer; the sequence is VLLLVGLGIGATPFISILKDL. Over 781–963 the chain is Cytoplasmic; the sequence is LKNIVTMEEQ…TKFEFHKEHF (183 aa).

The protein belongs to the RBOH (TC 5.B.1.3) family. In terms of assembly, monomer and homodimer. Post-translationally, phosphorylated by CPK.

It localises to the cell membrane. Functionally, calcium-dependent NADPH oxidase that generates superoxide. Involved in the rapid and transient phase I oxidative burst induced by pathogen infection. This chain is Respiratory burst oxidase homolog protein A (RBOHA), found in Solanum tuberosum (Potato).